The primary structure comprises 431 residues: Enolase (431 aa).

Gln-166 contacts (2R)-2-phosphoglycerate. Catalysis depends on Glu-208, which acts as the Proton donor. Mg(2+) contacts are provided by Asp-245, Glu-288, and Asp-315. (2R)-2-phosphoglycerate contacts are provided by Lys-340, Arg-369, Ser-370, and Lys-391. Lys-340 (proton acceptor) is an active-site residue.

It belongs to the enolase family. Mg(2+) is required as a cofactor.

It is found in the cytoplasm. The protein localises to the secreted. The protein resides in the cell surface. It catalyses the reaction (2R)-2-phosphoglycerate = phosphoenolpyruvate + H2O. The protein operates within carbohydrate degradation; glycolysis; pyruvate from D-glyceraldehyde 3-phosphate: step 4/5. Functionally, catalyzes the reversible conversion of 2-phosphoglycerate (2-PG) into phosphoenolpyruvate (PEP). It is essential for the degradation of carbohydrates via glycolysis. In Clostridium botulinum (strain Kyoto / Type A2), this protein is Enolase.